The primary structure comprises 140 residues: Profilin-1 (140 aa).

Ala-2 carries the post-translational modification N-acetylalanine. Ser-28 bears the Phosphoserine mark. Lys-54 participates in a covalent cross-link: Glycyl lysine isopeptide (Lys-Gly) (interchain with G-Cter in SUMO2); alternate. Lys-54 participates in a covalent cross-link: Glycyl lysine isopeptide (Lys-Gly) (interchain with G-Cter in ubiquitin); alternate. Residue Ser-57 is modified to Phosphoserine. N6-acetyllysine is present on Lys-108. Tyr-129 carries the phosphotyrosine modification. Ser-138 is modified (phosphoserine; by ROCK1).

The protein belongs to the profilin family. In terms of assembly, found in a complex with XPO6, Ran, ACTB and PFN1. Interacts with ACTB. Interacts with VASP. Interacts with HTT. Interacts with SH3BGRL. Occurs in many kinds of cells as a complex with monomeric actin in a 1:1 ratio. Interacts with ACTMAP. In terms of processing, phosphorylation at Ser-138 reduces its affinity for G-actin and blocks its interaction with HTT, reducing its ability to inhibit androgen receptor (AR) and HTT aggregation.

The protein localises to the cytoplasm. It is found in the cytoskeleton. Binds to actin and affects the structure of the cytoskeleton. At high concentrations, profilin prevents the polymerization of actin, whereas it enhances it at low concentrations. By binding to PIP2, it inhibits the formation of IP3 and DG. Inhibits androgen receptor (AR) and HTT aggregation and binding of G-actin is essential for its inhibition of AR. The protein is Profilin-1 (Pfn1) of Mus musculus (Mouse).